Here is a 105-residue protein sequence, read N- to C-terminus: Large ribosomal subunit protein uL24 (105 aa).

The protein belongs to the universal ribosomal protein uL24 family. In terms of assembly, part of the 50S ribosomal subunit.

One of two assembly initiator proteins, it binds directly to the 5'-end of the 23S rRNA, where it nucleates assembly of the 50S subunit. Functionally, one of the proteins that surrounds the polypeptide exit tunnel on the outside of the subunit. This is Large ribosomal subunit protein uL24 from Hahella chejuensis (strain KCTC 2396).